A 338-amino-acid chain; its full sequence is Mitoferrin-1 (338 aa).

Residues 1-37 form a disordered region; that stretch reads MELRRGGVGSQAAGRRMDGDCRDGGCGSKDAGSEDYE. Solcar repeat units follow at residues 43-131, 141-225, and 232-326; these read ASVS…MKRT, NSHL…LQEQ, and YNPQ…FKYF. A run of 6 helical transmembrane segments spans residues 45–64, 106–125, 143–162, 200–219, 234–253, and 301–320; these read VSTH…SIMY, GLNV…FACY, HLAN…AVMN, SYTT…FITY, PQSH…AATT, and GIQA…WSVY.

Belongs to the mitochondrial carrier (TC 2.A.29) family. As to quaternary structure, interacts with ACB10; this interaction stabilizes SLC25A37 and enhances the function of SLC25A37 to import mitochondrial iron during erythroid differentiation.

It is found in the mitochondrion inner membrane. It catalyses the reaction Fe(2+)(in) = Fe(2+)(out). Its function is as follows. Mitochondrial iron transporter that specifically mediates iron uptake in developing erythroid cells, thereby playing an essential role in heme biosynthesis. This chain is Mitoferrin-1 (Slc25a37), found in Rattus norvegicus (Rat).